Reading from the N-terminus, the 384-residue chain is DNA replication and repair protein RecF (384 aa).

43–50 contributes to the ATP binding site; sequence GENGSGKT.

This sequence belongs to the RecF family.

The protein localises to the cytoplasm. Its function is as follows. The RecF protein is involved in DNA metabolism; it is required for DNA replication and normal SOS inducibility. RecF binds preferentially to single-stranded, linear DNA. It also seems to bind ATP. The polypeptide is DNA replication and repair protein RecF (Brucella abortus (strain 2308)).